The chain runs to 571 residues: Hemagglutinin-neuraminidase (571 aa).

Residues 1 to 26 (MDRAVNRVVLENEEREAKNTWRLVFR) are Intravirion-facing. A helical membrane pass occupies residues 27–47 (IAVLLLMVMTLAISAAALVYS). Residues 48 to 571 (MGASTPRDLA…LVEILKDDRV (524 aa)) lie on the Virion surface side of the membrane. N-linked (GlcNAc...) asparagine; by host glycosylation is present at N119. An important for interaction with fusion/F protein region spans residues 124-152 (GEPVHDPDYIGGIGKELIVDDISDVTSFY). Disulfide bonds link C172–C196, C186–C247, and C238–C251. Positions 234 to 239 (NRKSCS) are involved in neuraminidase activity. N-linked (GlcNAc...) asparagine; by host glycans are attached at residues N341 and N433. 2 disulfide bridges follow: C344–C461 and C455–C465. 3 N-linked (GlcNAc...) asparagine; by host glycosylation sites follow: N481, N508, and N538. C531 and C542 form a disulfide bridge.

This sequence belongs to the paramyxoviruses hemagglutinin-neuraminidase family. In terms of assembly, homotetramer; composed of disulfide-linked homodimers. Interacts with F protein trimer. Interacts with host CG-1B; this interaction inhibits viral adsorption and replication rather than internalization.

The protein localises to the virion membrane. Its subcellular location is the host cell membrane. It carries out the reaction Hydrolysis of alpha-(2-&gt;3)-, alpha-(2-&gt;6)-, alpha-(2-&gt;8)- glycosidic linkages of terminal sialic acid residues in oligosaccharides, glycoproteins, glycolipids, colominic acid and synthetic substrates.. Functionally, mediates the viral entry into the host cell together with fusion/F protein. Attaches the virus to sialic acid-containing cell receptors and thereby initiates infection. Binding of HN protein to the receptor induces a conformational change that allows the F protein to trigger virion/cell membranes fusion. Neuraminidase activity ensures the efficient spread of the virus by dissociating the mature virions from the neuraminic acid containing glycoproteins. In Gallus gallus (Chicken), this protein is Hemagglutinin-neuraminidase (HN).